The primary structure comprises 420 residues: Putative movement protein (420 aa).

Composition is skewed to low complexity over residues 1–18 (MPLT…TSFS) and 30–59 (TSCS…GSCP). 6 disordered regions span residues 1 to 77 (MPLT…TARP), 137 to 181 (SMSR…SARS), 195 to 219 (RPKT…STRT), 235 to 281 (IMSE…RPPP), 327 to 370 (PSAG…RPIQ), and 396 to 420 (LPPP…QPWP). The span at 60 to 69 (KTPPGTPPLP) shows a compositional bias: pro residues. Polar residues predominate over residues 137-157 (SMSRRATQPPTTRSRVRPSTG). Positions 158–181 (SRPPVSPLVTSSSPSPFSTLSARS) are enriched in low complexity. Residues 253–263 (GLRSASLSTAG) are compositionally biased toward polar residues. The span at 327–348 (PSAGSSPFTPTVSGCSASTSSA) shows a compositional bias: low complexity.

Cell-to-cell movement. This is Putative movement protein from Maize rayado fino virus (isolate Costa Rica/Guapiles) (MRFV).